Reading from the N-terminus, the 201-residue chain is Prostamide/prostaglandin F synthase (201 aa).

Belongs to the peroxiredoxin-like PRXL2 family. Prostamide/prostaglandin F synthase subfamily.

The protein resides in the cytoplasm. The protein localises to the cytosol. It catalyses the reaction prostaglandin H2 + [thioredoxin]-dithiol = prostaglandin F2alpha + [thioredoxin]-disulfide. The enzyme catalyses prostamide F2alpha + [thioredoxin]-disulfide = prostamide H2 + [thioredoxin]-dithiol. Functionally, catalyzes the reduction of prostaglandin-ethanolamide H(2) (prostamide H(2)) to prostamide F(2alpha) with NADPH as proton donor. Also able to reduce prostaglandin H(2) to prostaglandin F(2alpha). The chain is Prostamide/prostaglandin F synthase (prxl2b) from Xenopus tropicalis (Western clawed frog).